The primary structure comprises 549 residues: Cell death protein 4 (549 aa).

Residues M1–I91 enclose the CARD domain. ATP contacts are provided by Y131, G162, G164, K165, S166, V167, R273, T367, and Y369. Positions R133 to D417 constitute an NB-ARC domain. S166 provides a ligand contact to Mg(2+).

In terms of assembly, associates as an asymmetric homodimer with ced-9. Only one ced-4 molecule within the dimer interacts directly with ced-9. Upon release from ced-9, forms a multimer, known as the apoptosome, and interacts with ced-3; the interaction results in ced-3 autoproteolytic cleavage and activation. Multiple oligomeric states of the apoptosome are observed including hexamers, heptamers and octamers. The hexamers likely represent a pre-mature state of the apoptosome and may contribute to the regulation of ced-3 activation. The apoptosome multimer also interacts with two processed ced-3 to form a stable holoenzyme. Interacts with sex-determining protein fem-1. May form a complex composed of ced-3, ced-4 and mac-1 or of ced-9, ced-4 and mac-1. Within the complex, interacts with mac-1.

The protein resides in the mitochondrion. It localises to the cytoplasm. The protein localises to the perinuclear region. Component of the egl-1, ced-9, ced-4 and ced-3 apoptotic signaling cascade required for the initiation of programmed cell death in cells fated to die during embryonic and postembryonic development. During oogenesis, required for germline apoptosis downstream of ced-9 and upstream of ced-3 but independently of egl-1. May regulate germline apoptosis in response to DNA damage, probably downstream of let-60/ras and mpk-1 pathway. Regulates CEP neuron apoptosis in response to high Al(3+) levels. During male tail morphogenesis, promotes apoptosis of the tail-spike cell upstream of ced-3 but independently of egl-1 and ced-9. May play a role in sex-specific cell apoptosis, probably by promoting ced-3-mediated cleavage of sex-determining protein fem-1. During larval development, required for the elimination of transient presynaptic components downstream of egl-1 and ced-9 and upstream of ced-3 apoptotic pathway. Downstream of calreticulin crt-1 and upstream of ced-3 and independently of egl-1 and ced-9, plays a role in the initial steps of axonal regrowth following axotomy. Together with ain-1, a component of the miRNA-induced-silencing complex (miRISC), and probably upstream of ced-3, regulates temporal cell fate patterning during larval development. May play a role in resistance to S.typhimurium-mediated infection. Its function is as follows. Plays a major role in programmed cell death. egl-1 binds to and directly inhibits the activity of ced-9, releasing the cell death activator ced-4 from a ced-9/ced-4-containing protein complex and allowing ced-4 to induce caspase ced-3 autoproteolytic cleavage and activation. Also forms a holoenzyme with processed ced-3 enhancing ced-3 activity. Functionally, prevents programmed cell death. The chain is Cell death protein 4 (ced-4) from Caenorhabditis elegans.